A 651-amino-acid chain; its full sequence is L-type lectin-domain containing receptor kinase IX.1 (651 aa).

A signal peptide spans 1–19 (MANSILLFSFVLVLPFVCS). The interval 20 to 251 (VQFNISRFGS…GNRLLSWEFS (232 aa)) is legume-lectin like. The Extracellular segment spans residues 20–269 (VQFNISRFGS…KKSQNDKKGM (250 aa)). 8 N-linked (GlcNAc...) asparagine glycosylation sites follow: N23, N125, N129, N162, N169, N174, N195, and N211. Residues 270-290 (IIGISVSGFVLLTFFITSLIV) form a helical membrane-spanning segment. The Cytoplasmic segment spans residues 291–651 (FLKRKQQKKK…VTFSSAQHGR (361 aa)). A Protein kinase domain is found at 335–616 (FADDRKLGEG…LNLEAPVPHL (282 aa)). ATP is bound by residues 341 to 349 (LGEGGFGAV) and K364. Residue D459 is the Proton acceptor of the active site. Positions 630–651 (SNTTSVSSGGATVTFSSAQHGR) are disordered.

In the C-terminal section; belongs to the protein kinase superfamily. Ser/Thr protein kinase family. It in the N-terminal section; belongs to the leguminous lectin family. As to quaternary structure, interacts with ABCG40.

The protein localises to the cell membrane. It carries out the reaction L-seryl-[protein] + ATP = O-phospho-L-seryl-[protein] + ADP + H(+). The enzyme catalyses L-threonyl-[protein] + ATP = O-phospho-L-threonyl-[protein] + ADP + H(+). In terms of biological role, promotes hydrogen peroxide H(2)O(2) production and cell death. Its function is as follows. Involved in resistance response to the pathogenic oomycetes Phytophthora infestans and Phytophthora capsici. This Arabidopsis thaliana (Mouse-ear cress) protein is L-type lectin-domain containing receptor kinase IX.1.